The primary structure comprises 349 residues: MSFSVAVAGASGYAGGELLRLLADHPRLEVQTLTAFQNAGERLREVHPHLTSYADRTFVETTAEQLAGHDVVFLALPHGKSGAITAELDDQTLVVDCGADHRLVDEAAWDAFYGGDFAGAWPYGLPELLHAEEGGTQRTRLSGVKRIAVPGCNVTAITLGLQPGIRAGVIEPEDVVAVLAVGPSGAGRSLRTNLLASEILGSASAYAVGGTHRHTPEIRQNLETAGGGHVSVSFTPVLVPMARGILATATARLAPGFSAHDVRAAWELAYADEPFVHLLPEGTFPNVSDVTGSNTALVGLAIDEAAGRVVTVTAIDNLVKGTAGAAIQSANIALGLPEAMGLPVNGVAP.

The active site involves C152.

Belongs to the NAGSA dehydrogenase family. Type 1 subfamily.

Its subcellular location is the cytoplasm. The enzyme catalyses N-acetyl-L-glutamate 5-semialdehyde + phosphate + NADP(+) = N-acetyl-L-glutamyl 5-phosphate + NADPH + H(+). Its pathway is amino-acid biosynthesis; L-arginine biosynthesis; N(2)-acetyl-L-ornithine from L-glutamate: step 3/4. Functionally, catalyzes the NADPH-dependent reduction of N-acetyl-5-glutamyl phosphate to yield N-acetyl-L-glutamate 5-semialdehyde. The chain is N-acetyl-gamma-glutamyl-phosphate reductase from Clavibacter sepedonicus (Clavibacter michiganensis subsp. sepedonicus).